The sequence spans 864 residues: Dynamin-1 (864 aa).

Positions 28–294 (DLDLPQIAVV…LTNHIRDTLP (267 aa)) constitute a Dynamin-type G domain. Positions 38-45 (GGQSAGKS) are G1 motif. Residues Ser-41, Gly-43, Lys-44, Ser-45, Ser-46, Arg-59, and Gly-60 each contribute to the GDP site. The segment at 64–66 (VTR) is G2 motif. Tyr-80 is modified (phosphotyrosine). Tyr-125 carries the post-translational modification 3'-nitrotyrosine; alternate. Tyr-125 carries the post-translational modification Phosphotyrosine; alternate. The segment at 136 to 139 (DLPG) is G3 motif. Residues 205–208 (TKLD) are G4 motif. GDP contacts are provided by Lys-206, Asp-208, Asp-211, Asn-236, Arg-237, and Gln-239. Residues 235-238 (VNRS) form a G5 motif region. Ser-306 and Ser-347 each carry phosphoserine. Tyr-354 is subject to Phosphotyrosine. At Ser-512 the chain carries Phosphoserine. Residues 519–625 (LVIRKGWLTI…WKASFLRAGV (107 aa)) form the PH domain. The region spanning 659–750 (VETIRNLVDS…IIGDINTTTV (92 aa)) is the GED domain. The tract at residues 767-864 (SVPAGRRSPT…PESPRPPFDL (98 aa)) is disordered. Ser-774 carries the post-translational modification Phosphoserine; by CDK5. Ser-778 is modified (phosphoserine). The residue at position 796 (Arg-796) is an Omega-N-methylarginine. The residue at position 822 (Ser-822) is a Phosphoserine. Pro residues predominate over residues 825-843 (PFGPPPQVPSRPNRAPPGV). Phosphoserine occurs at positions 851 and 857.

Belongs to the TRAFAC class dynamin-like GTPase superfamily. Dynamin/Fzo/YdjA family. As to quaternary structure, homodimer; homodimerization is mediated by the dynamin-type G domain which promotes assembly-stimulated GTPase activity. Homo-tetramer formed from two dimers in the absence of lipid. Oligomerizes into a helical polymer that self-assembles around the vesicle membrane, when associated to the menbrane through lipid binding. Interacts (via C-terminal proline-rich domain (PRD)) with SNX9 (via SH3 domain); this interaction allows regulation of DNM1 self-assembly during late stages of endocytic vesicle formation and supports DNM1's early functions in accelerating clathrin-coated pits (CCPs) maturation in non neuronals cell. Interacts (via C-terminal proline-rich domain (PRD)) with MYO1E (via SH3 domain); this interaction regulates receptor-mediated endocytosis. Interacts with SNX33 (via SH3 domain); this interaction decreases DNM1-dependent endocytosis. Interacts with DIAPH1. Interacts with GRB2 (via SH3 domain); this interaction mediates disassembly of DNM1 polymers, therefore modulates self-assembly. Forms a complex with BIN1 (via SH3 domain) and SH3GL2 (via SH3 domain). Forms a complex with SH3GL2 (via SH3 domain) and AMPH (via SH3 domain). Forms a complex with SH3GL2 (via SH3 domain) and SYNJ1. Interacts with AMPH. Interacts (via C-terminal proline-rich domain (PRD)) with SYT1; this interaction facilitates vesicle fission during clathrin-mediated endocytosis (CME). Interacts (via C-terminal proline-rich domain (PRD)) with PLCG1 (via SH3 domain); this interaction stimulates the release of GDP from DNM1 and enhances DNM1-dependent endocytosis. Interacts with SNPH; this interaction inhibits the binding of DNM1 to AMPH and DNM1-receptor-mediated endocytosis. Interacts with CAV1. Interacts with SH3GLB1 (via SH3 domain). Interacts with PACSIN1 (via SH3 domain), PACSIN2 (via SH3 domain) and PACSIN3 (via SH3 domain). Interacts with UNC119; this interaction decreases DNM1's GTPase activity and affects DNM1's interaction with AMPH. Interacts (GTP-bound form) with DNAJC6; this interaction allows clathrin-coated vesicle (CCV) formation at the plasma membrane. Phosphorylation at Ser-774 by GSK3B/GSK3-beta leads to inactivation of receptor-mediated endocytosis in non-neuronal cells. Dephosphorylation at Ser-774, through the EGFR downstream signaling, leads to activation and regulates early stages of clathrin-mediated endocytosis (CME). Phosphorylated by CDK5 leading to synaptic vesicle endocytosis (SVE) activation. Brain-specific (peripheral sensory neurons).

Its subcellular location is the cytoplasmic vesicle. The protein localises to the clathrin-coated vesicle. The protein resides in the golgi apparatus. It localises to the cell membrane. It is found in the membrane. Its subcellular location is the clathrin-coated pit. The protein localises to the presynapse. The protein resides in the secretory vesicle. It localises to the chromaffin granule. The catalysed reaction is GTP + H2O = GDP + phosphate + H(+). Its function is as follows. Catalyzes the hydrolysis of GTP and utilizes this energy to mediate vesicle scission and participates in many forms of endocytosis, such as clathrin-mediated endocytosis or synaptic vesicle endocytosis as well as rapid endocytosis (RE). Associates to the membrane, through lipid binding, and self-assembles into rings and stacks of interconnected rings through oligomerization to form a helical polymer around the vesicle membrane leading to constriction of invaginated coated pits around their necks. Self-assembly of the helical polymer induces membrane tubules narrowing until the polymer reaches a length sufficient to trigger GTP hydrolysis. Depending on the curvature imposed on the tubules, membrane detachment from the helical polymer upon GTP hydrolysis can cause spontaneous hemifission followed by complete fission. May play a role in regulating early stages of clathrin-mediated endocytosis in non-neuronal cells through its activation by dephosphorylation via the signaling downstream of EGFR. Controls vesicle size at a step before fission, during formation of membrane pits, at hippocampal synapses. Controls plastic adaptation of the synaptic vesicle recycling machinery to high levels of activity. Mediates rapid endocytosis (RE), a Ca(2+)-dependent and clathrin- and K(+)-independent process in chromaffin cells. Microtubule-associated force-producing protein involved in producing microtubule bundles and able to bind and hydrolyze GTP. Through its interaction with DNAJC6, acts during the early steps of clathrin-coated vesicle (CCV) formation. The sequence is that of Dynamin-1 (Dnm1) from Rattus norvegicus (Rat).